Consider the following 291-residue polypeptide: MAITAAMVKELRDSTGAGMMDAKKALTENNGDMEAAVDWLRTKGLAKAAKKSGRTAAEGLVAVKVQGGHGVAVEVNSETDFVGKNADFQKMVAGIADVALGASDIDALRAADMGGKTVEQAVIDAVAVIGENMSVRRMSSIDGENVVSYVHNAAAPGMGKIGVLVATNGGDEAFGKQVAMHIAAVNPASLSEADLDPAVVEKEKQVQMDIARESGKPEQVIEKMIIGRMKKYMSEVTLLNQSFVVNPDLTVGDAAKEAGATITGFVRLEVGEGIEVVKEDFAAEVAKAVKG.

An involved in Mg(2+) ion dislocation from EF-Tu region spans residues 79–82 (TDFV).

It belongs to the EF-Ts family.

The protein localises to the cytoplasm. Associates with the EF-Tu.GDP complex and induces the exchange of GDP to GTP. It remains bound to the aminoacyl-tRNA.EF-Tu.GTP complex up to the GTP hydrolysis stage on the ribosome. The sequence is that of Elongation factor Ts from Roseobacter denitrificans (strain ATCC 33942 / OCh 114) (Erythrobacter sp. (strain OCh 114)).